Consider the following 308-residue polypeptide: Ribosomal RNA small subunit methyltransferase A (308 aa).

Residues asparagine 35, valine 37, glycine 62, glutamate 83, aspartate 113, and asparagine 136 each contribute to the S-adenosyl-L-methionine site.

It belongs to the class I-like SAM-binding methyltransferase superfamily. rRNA adenine N(6)-methyltransferase family. RsmA subfamily.

It localises to the cytoplasm. The enzyme catalyses adenosine(1518)/adenosine(1519) in 16S rRNA + 4 S-adenosyl-L-methionine = N(6)-dimethyladenosine(1518)/N(6)-dimethyladenosine(1519) in 16S rRNA + 4 S-adenosyl-L-homocysteine + 4 H(+). Functionally, specifically dimethylates two adjacent adenosines (A1518 and A1519) in the loop of a conserved hairpin near the 3'-end of 16S rRNA in the 30S particle. May play a critical role in biogenesis of 30S subunits. In Bifidobacterium longum (strain NCC 2705), this protein is Ribosomal RNA small subunit methyltransferase A.